The following is a 470-amino-acid chain: Ribulose bisphosphate carboxylase large chain (470 aa).

Substrate-binding residues include Asn-115 and Thr-165. Lys-167 serves as the catalytic Proton acceptor. Lys-169 contacts substrate. Residues Lys-193, Asp-195, and Glu-196 each coordinate Mg(2+). Lys-193 carries the N6-carboxylysine modification. Residue His-286 is the Proton acceptor of the active site. Substrate contacts are provided by Arg-287, His-319, and Ser-371.

Belongs to the RuBisCO large chain family. Type I subfamily. Heterohexadecamer of 8 large chains and 8 small chains. The cofactor is Mg(2+).

Its subcellular location is the carboxysome. It carries out the reaction 2 (2R)-3-phosphoglycerate + 2 H(+) = D-ribulose 1,5-bisphosphate + CO2 + H2O. It catalyses the reaction D-ribulose 1,5-bisphosphate + O2 = 2-phosphoglycolate + (2R)-3-phosphoglycerate + 2 H(+). Its function is as follows. RuBisCO catalyzes two reactions: the carboxylation of D-ribulose 1,5-bisphosphate, the primary event in carbon dioxide fixation, as well as the oxidative fragmentation of the pentose substrate in the photorespiration process. Both reactions occur simultaneously and in competition at the same active site. The protein is Ribulose bisphosphate carboxylase large chain of Synechococcus sp. (strain CC9311).